The sequence spans 430 residues: Adenylosuccinate synthetase (430 aa).

GTP-binding positions include 12–18 and 40–42; these read GDEGKGK and GHT. Aspartate 13 functions as the Proton acceptor in the catalytic mechanism. Residues aspartate 13 and glycine 40 each coordinate Mg(2+). IMP-binding positions include 13-16, 38-41, threonine 129, arginine 143, glutamine 224, threonine 239, and arginine 303; these read DEGK and NAGH. Histidine 41 (proton donor) is an active-site residue. 299–305 provides a ligand contact to substrate; sequence TVSNRER. Residues arginine 305, 331–333, and 413–415 each bind GTP; these read KLD and STG.

Belongs to the adenylosuccinate synthetase family. Homodimer. Mg(2+) is required as a cofactor.

It localises to the cytoplasm. The enzyme catalyses IMP + L-aspartate + GTP = N(6)-(1,2-dicarboxyethyl)-AMP + GDP + phosphate + 2 H(+). The protein operates within purine metabolism; AMP biosynthesis via de novo pathway; AMP from IMP: step 1/2. Functionally, plays an important role in the de novo pathway of purine nucleotide biosynthesis. Catalyzes the first committed step in the biosynthesis of AMP from IMP. The protein is Adenylosuccinate synthetase of Ehrlichia ruminantium (strain Welgevonden).